Reading from the N-terminus, the 3083-residue chain is Laminin subunit alpha-1 (3083 aa).

The N-terminal stretch at 1–24 (MRGSGTGAALLVLLASVLWVTVRS) is a signal peptide. Q25 is modified (pyrrolidone carboxylic acid). Residues 25–276 (QQRGLFPAIL…SIKDISVGGM (252 aa)) enclose the Laminin N-terminal domain. 6 disulfides stabilise this stretch: C277/C286, C279/C297, C299/C308, C311/C331, C334/C343, and C336/C368. 4 consecutive Laminin EGF-like domains span residues 277–333 (CICY…ECEE), 334–403 (CNCH…PCRP), 404–460 (CNCD…NCIP), and 461–509 (CDCR…GCSE). An N-linked (GlcNAc...) asparagine glycan is attached at N370. Intrachain disulfides connect C371/C380, C383/C401, C404/C416, C406/C434, C436/C445, C448/C458, C461/C474, C463/C478, C480/C489, and C492/C507. Positions 510-519 (CFCFGVSGVC) constitute a Laminin EGF-like 5; first part domain. The Laminin IV type A 1 domain maps to 523 to 715 (TWSISQVTNM…DLAVAADVEH (193 aa)). An N-linked (GlcNAc...) asparagine glycan is attached at N672. The Laminin EGF-like 5; second part domain maps to 716–748 (CECPQGYTGTSCEACLPGYYRVDGILFGGICQP). 32 disulfides stabilise this stretch: C749–C758, C751–C764, C767–C776, C779–C795, C798–C813, C800–C823, C826–C835, C838–C853, C856–C870, C858–C877, C880–C889, C892–C906, C909–C921, C911–C928, C930–C939, C942–C955, C958–C970, C960–C976, C978–C987, C990–C1002, C1005–C1014, C1007–C1021, C1023–C1032, C1035–C1048, C1051–C1063, C1053–C1070, C1072–C1081, C1084–C1094, C1097–C1109, C1099–C1125, C1127–C1136, and C1139–C1154. 8 consecutive Laminin EGF-like domains span residues 749-797 (CECH…DCQP), 798-855 (CACP…TCVP), 856-908 (CNCS…NCRA), 909-957 (CDCH…GCVP), 958-1004 (CNCS…GCTP), 1005-1050 (CDCA…GCQA), 1051-1096 (CNCS…DCVP), and 1097-1156 (CGCD…GCSP). Positions 1147 to 1149 (RGD) match the Cell attachment site motif. In terms of domain architecture, Laminin EGF-like 14; first part spans 1157–1166 (CFCFGLSQLC). The Laminin IV type A 2 domain occupies 1177-1368 (ITLASDQPLL…EGEAALLLEL (192 aa)). N-linked (GlcNAc...) asparagine glycosylation occurs at N1344. Residues 1369-1409 (CVCPPGTAGHSCQDCAPGYYREKLPESGGRGPRPLLAPCVP) enclose the Laminin EGF-like 14; second part domain. 12 disulfide bridges follow: C1410–C1419, C1412–C1426, C1429–C1438, C1441–C1456, C1459–C1473, C1461–C1483, C1486–C1495, C1498–C1513, C1516–C1528, C1518–C1535, C1537–C1546, and C1549–C1560. Laminin EGF-like domains lie at 1410–1458 (CNCN…DCTP), 1459–1515 (CTCP…SCQT), and 1516–1562 (CDCN…DCVS). The interval 1564-2123 (DDDCVGPLLN…SRARKQVASI (560 aa)) is domain II and I. The stretch at 1617 to 1691 (AKKIRAEIQL…VATLNQTARK (75 aa)) forms a coiled coil. Residues N1659, N1686, N1718, N1725, N1763, and N1811 are each glycosylated (N-linked (GlcNAc...) asparagine). Positions 1723-1809 (QQNATLELKA…QEKKLRVQEE (87 aa)) form a coiled coil. Positions 1868–1901 (KRRARDLVHRAEQHASELQSRAGALDRDLENVRN) form a coiled coil. N1935, N2026, N2045, and N2066 each carry an N-linked (GlcNAc...) asparagine glycan. Laminin G-like domains follow at residues 2124–2304 (KVAV…CNGC), 2312–2488 (DSSF…RKGC), 2493–2679 (IQSV…LDTC), 2721–2893 (AHQF…VDRC), and 2898–3078 (QEGT…PHSC). C2278 and C2304 are joined by a disulfide. N2355 is a glycosylation site (N-linked (GlcNAc...) asparagine). 2 disulfides stabilise this stretch: C2464–C2488 and C2652–C2679. Residue N2834 is glycosylated (N-linked (GlcNAc...) asparagine). A disulfide bridge connects residues C2868 and C2893. N-linked (GlcNAc...) asparagine glycosylation occurs at N2923. An intrachain disulfide couples C3047 to C3078.

In terms of assembly, laminin is a complex glycoprotein, consisting of three different polypeptide chains (alpha, beta, gamma), which are bound to each other by disulfide bonds into a cross-shaped molecule comprising one long and three short arms with globules at each end. Alpha-1 is a subunit of laminin-1 (laminin-111 or EHS laminin) and laminin-3 (laminin-121 or S-laminin). Post-translationally, tyrosine phosphorylated by PKDCC/VLK.

Its subcellular location is the secreted. The protein localises to the extracellular space. The protein resides in the extracellular matrix. It localises to the basement membrane. Binding to cells via a high affinity receptor, laminin is thought to mediate the attachment, migration and organization of cells into tissues during embryonic development by interacting with other extracellular matrix components. This chain is Laminin subunit alpha-1 (Lama1), found in Mus musculus (Mouse).